A 357-amino-acid polypeptide reads, in one-letter code: Dihydroflavonol 4-reductase (357 aa).

NADP(+) contacts are provided by lysine 49 and tyrosine 168.

This sequence belongs to the NAD(P)-dependent epimerase/dehydratase family. Dihydroflavonol-4-reductase subfamily.

It carries out the reaction a (2R,3S,4S)-leucoanthocyanidin + NADP(+) = a (2R,3R)-dihydroflavonol + NADPH + H(+). The enzyme catalyses (2S)-flavan-4-ol + NADP(+) = (2S)-flavanone + NADPH + H(+). The protein operates within pigment biosynthesis; anthocyanin biosynthesis. Functionally, bifunctional enzyme involved in flavonoid metabolism. The protein is Dihydroflavonol 4-reductase (A1) of Zea mays (Maize).